We begin with the raw amino-acid sequence, 500 residues long: Cobyric acid synthase (500 aa).

The 190-residue stretch at 255 to 444 (AIDIAVIRCP…MHDLFHNDAF (190 aa)) folds into the GATase cobBQ-type domain. C337 functions as the Nucleophile in the catalytic mechanism. Residue H436 is part of the active site.

The protein belongs to the CobB/CobQ family. CobQ subfamily.

It participates in cofactor biosynthesis; adenosylcobalamin biosynthesis. Its function is as follows. Catalyzes amidations at positions B, D, E, and G on adenosylcobyrinic A,C-diamide. NH(2) groups are provided by glutamine, and one molecule of ATP is hydrogenolyzed for each amidation. The protein is Cobyric acid synthase of Geobacillus thermodenitrificans (strain NG80-2).